The chain runs to 270 residues: uncharacterized protein (270 aa).

6 residues coordinate a divalent metal cation: aspartate 53, histidine 55, aspartate 83, asparagine 116, histidine 207, and histidine 209.

It belongs to the metallophosphoesterase superfamily. A divalent metal cation is required as a cofactor.

This is an uncharacterized protein from Bacillus subtilis (strain 168).